Consider the following 504-residue polypeptide: UDP-N-acetylglucosamine--peptide N-acetylglucosaminyltransferase GtfA subunit (504 aa).

A UDP-binding site is contributed by 16–19 (GVEY). His243 contacts N-acetyl-D-glucosamine. 385–386 (HK) is a binding site for UDP. 405–408 (EGFG) serves as a coordination point for N-acetyl-D-glucosamine.

Belongs to the glycosyltransferase group 1 family. Glycosyltransferase 4 subfamily. Interacts with stabilizing protein GtfB (Gtf1), probably via the N-terminus of this protein; probably forms a heterotetramer with 2 subunits each of GtfA and GtfB. Part of the accessory SecA2/SecY2 protein translocation apparatus.

The protein resides in the cytoplasm. The protein localises to the cell membrane. The catalysed reaction is L-seryl-[protein] + UDP-N-acetyl-alpha-D-glucosamine = 3-O-[N-acetyl-alpha-D-glucosaminyl]-L-seryl-[protein] + UDP + H(+). It functions in the pathway protein modification; protein glycosylation. Its function is as follows. Required for polymorphic O-glycosylation of serine-rich repeat protein Fap1. Catalyzes the first step in glycosylation by transferring N-acetylglucosamine from UDP-GlcNAc to serine residues in Fap1. Part of the accessory SecA2/SecY2 system specifically required to export Fap1, a serine-rich fimbrial adhesin encoded upstream in the same operon. The GtfA-GtfB (Gtf1-Gtf2 in this bacteria) complex adds GlcNAc from UDP-GlcNAc to Fap1, attaching the first sugar residue. Cannot use not UDP-Glc as substrate. This subunit has very low glycosyltransferase activity; the GtfB stabilizing protein enhances membrane association, protease resistance and glycosyltransferase activity. The sequence is that of UDP-N-acetylglucosamine--peptide N-acetylglucosaminyltransferase GtfA subunit from Streptococcus parasanguinis.